The sequence spans 463 residues: Fumarate hydratase class II (463 aa).

Substrate contacts are provided by residues 95-97 (SGT), 126-129 (HPND), 136-138 (SSN), and T184. H185 serves as the catalytic Proton donor/acceptor. S315 is an active-site residue. Residues S316 and 321–323 (KIN) each bind substrate.

This sequence belongs to the class-II fumarase/aspartase family. Fumarase subfamily. In terms of assembly, homotetramer.

The protein localises to the cytoplasm. It carries out the reaction (S)-malate = fumarate + H2O. It participates in carbohydrate metabolism; tricarboxylic acid cycle; (S)-malate from fumarate: step 1/1. Involved in the TCA cycle. Catalyzes the stereospecific interconversion of fumarate to L-malate. The polypeptide is Fumarate hydratase class II (Chlamydia muridarum (strain MoPn / Nigg)).